A 172-amino-acid polypeptide reads, in one-letter code: Adenine phosphoribosyltransferase (172 aa).

The protein belongs to the purine/pyrimidine phosphoribosyltransferase family. In terms of assembly, homodimer.

The protein localises to the cytoplasm. It carries out the reaction AMP + diphosphate = 5-phospho-alpha-D-ribose 1-diphosphate + adenine. It participates in purine metabolism; AMP biosynthesis via salvage pathway; AMP from adenine: step 1/1. In terms of biological role, catalyzes a salvage reaction resulting in the formation of AMP, that is energically less costly than de novo synthesis. In Prochlorococcus marinus (strain MIT 9215), this protein is Adenine phosphoribosyltransferase.